The sequence spans 474 residues: Iroquois-class homeodomain protein irx-5 (474 aa).

A DNA-binding region (homeobox; TALE-type) is located at residues 109 to 171 (DPAYRKNASR…NARRRLKKEN (63 aa)). 3 disordered regions span residues 174–222 (TWTP…SPDG), 252–294 (ERNG…IQQL), and 453–474 (SQSQ…MSSI). Acidic residues predominate over residues 182 to 199 (EDEDDDENIDLEKNEEDD). The span at 263 to 273 (PPTPPLCPPDQ) shows a compositional bias: pro residues.

This sequence belongs to the TALE/IRO homeobox family. As to expression, early in gastrulation, expressed in cells beneath the blastopore lip. Subsequently expressed in the neural plate in overlapping patterns with other irx members, which all share an anterior border of expression. At the time of neural tube closure (stage 19) in regions of the midbrain, hindbrain, neural tube and optic vesicle, where expression continues during tailbud stages. In stage 34, expressed throughout the eye retina. Does not appear to be expressed in the developing heart or pronephros.

Its subcellular location is the nucleus. Its function is as follows. Acts partially redundantly with other irx members in neural patterning. Required for formation of the posterior forebrain, midbrain, hindbrain, and to a lesser extent, spinal cord. Patterns the neuroectoderm in both the anterior/posterior and dorsal/ventral axes. Does not appear to play a role in pronephros kidney development. Involved in craniofacial and gonadal development. Modulates the migration of progenitor cell populations in branchial arches and gonads by repressing CXCL12. The protein is Iroquois-class homeodomain protein irx-5 (irx5) of Xenopus laevis (African clawed frog).